The following is a 196-amino-acid chain: Probable peptidyl-prolyl cis-trans isomerase (196 aa).

An N-terminal signal peptide occupies residues M1–A26. The 166-residue stretch at P29–D194 folds into the PPIase cyclophilin-type domain.

This sequence belongs to the cyclophilin-type PPIase family.

It localises to the periplasm. The enzyme catalyses [protein]-peptidylproline (omega=180) = [protein]-peptidylproline (omega=0). PPIases accelerate the folding of proteins. It catalyzes the cis-trans isomerization of proline imidic peptide bonds in oligopeptides. This Brucella abortus (strain 2308) protein is Probable peptidyl-prolyl cis-trans isomerase (ppi).